Here is a 252-residue protein sequence, read N- to C-terminus: Triosephosphate isomerase (252 aa).

Residue 10–12 (NWK) coordinates substrate. His96 functions as the Electrophile in the catalytic mechanism. The Proton acceptor role is filled by Glu168. Substrate contacts are provided by residues Gly174, Ser214, and 235–236 (GG).

This sequence belongs to the triosephosphate isomerase family. Homodimer.

Its subcellular location is the cytoplasm. It carries out the reaction D-glyceraldehyde 3-phosphate = dihydroxyacetone phosphate. Its pathway is carbohydrate biosynthesis; gluconeogenesis. It participates in carbohydrate degradation; glycolysis; D-glyceraldehyde 3-phosphate from glycerone phosphate: step 1/1. Involved in the gluconeogenesis. Catalyzes stereospecifically the conversion of dihydroxyacetone phosphate (DHAP) to D-glyceraldehyde-3-phosphate (G3P). The sequence is that of Triosephosphate isomerase from Lactococcus lactis subsp. cremoris (strain MG1363).